The chain runs to 484 residues: Probable cobyric acid synthase (484 aa).

The GATase cobBQ-type domain maps to 247 to 433 (ELHIQIVKLP…LHGIFHNFAF (187 aa)). The active-site Nucleophile is Cys325. His425 is an active-site residue.

It belongs to the CobB/CobQ family. CobQ subfamily.

It functions in the pathway cofactor biosynthesis; adenosylcobalamin biosynthesis. Catalyzes amidations at positions B, D, E, and G on adenosylcobyrinic A,C-diamide. NH(2) groups are provided by glutamine, and one molecule of ATP is hydrogenolyzed for each amidation. In Thermococcus onnurineus (strain NA1), this protein is Probable cobyric acid synthase.